A 166-amino-acid chain; its full sequence is Regulatory protein RecX (166 aa).

It belongs to the RecX family.

It is found in the cytoplasm. Modulates RecA activity. This chain is Regulatory protein RecX, found in Shigella sonnei (strain Ss046).